The chain runs to 402 residues: CCA-adding enzyme (402 aa).

Gly-32 and Arg-35 together coordinate ATP. Gly-32 and Arg-35 together coordinate CTP. Mg(2+) is bound by residues Asp-45 and Asp-47. 5 residues coordinate ATP: Arg-116, Asp-159, Arg-162, Arg-165, and Arg-168. CTP contacts are provided by Arg-116, Asp-159, Arg-162, Arg-165, and Arg-168.

This sequence belongs to the tRNA nucleotidyltransferase/poly(A) polymerase family. Bacterial CCA-adding enzyme type 3 subfamily. Homodimer. Mg(2+) serves as cofactor.

It carries out the reaction a tRNA precursor + 2 CTP + ATP = a tRNA with a 3' CCA end + 3 diphosphate. The catalysed reaction is a tRNA with a 3' CCA end + 2 CTP + ATP = a tRNA with a 3' CCACCA end + 3 diphosphate. Catalyzes the addition and repair of the essential 3'-terminal CCA sequence in tRNAs without using a nucleic acid template. Adds these three nucleotides in the order of C, C, and A to the tRNA nucleotide-73, using CTP and ATP as substrates and producing inorganic pyrophosphate. tRNA 3'-terminal CCA addition is required both for tRNA processing and repair. Also involved in tRNA surveillance by mediating tandem CCA addition to generate a CCACCA at the 3' terminus of unstable tRNAs. While stable tRNAs receive only 3'-terminal CCA, unstable tRNAs are marked with CCACCA and rapidly degraded. This chain is CCA-adding enzyme, found in Streptococcus pyogenes serotype M3 (strain ATCC BAA-595 / MGAS315).